A 311-amino-acid polypeptide reads, in one-letter code: Acetyl-coenzyme A carboxylase carboxyl transferase subunit beta (311 aa).

Residues 32 to 299 form the CoA carboxyltransferase N-terminal domain; it reads LWVKCPVSEE…TSMPAALTPP (268 aa). A disordered region spans residues 291–311; that stretch reads SMPAALTPPAPDHVVADGGSH.

It belongs to the AccD/PCCB family. As to quaternary structure, acetyl-CoA carboxylase is a heterohexamer composed of biotin carboxyl carrier protein (AccB), biotin carboxylase (AccC) and two subunits each of ACCase subunit alpha (AccA) and ACCase subunit beta (AccD).

The protein resides in the cytoplasm. The enzyme catalyses N(6)-carboxybiotinyl-L-lysyl-[protein] + acetyl-CoA = N(6)-biotinyl-L-lysyl-[protein] + malonyl-CoA. Its pathway is lipid metabolism; malonyl-CoA biosynthesis; malonyl-CoA from acetyl-CoA: step 1/1. In terms of biological role, component of the acetyl coenzyme A carboxylase (ACC) complex. Biotin carboxylase (BC) catalyzes the carboxylation of biotin on its carrier protein (BCCP) and then the CO(2) group is transferred by the transcarboxylase to acetyl-CoA to form malonyl-CoA. In Maricaulis maris (strain MCS10) (Caulobacter maris), this protein is Acetyl-coenzyme A carboxylase carboxyl transferase subunit beta.